A 624-amino-acid polypeptide reads, in one-letter code: Ceramide transfer protein (624 aa).

Residues 1-11 are compositionally biased toward polar residues; it reads MSDNQSWNSSG. Positions 1 to 24 are disordered; the sequence is MSDNQSWNSSGSEEDPETESGPPV. The 95-residue stretch at 23–117 folds into the PH domain; it reads PVERCGVLSK…WIDAIEQHKT (95 aa). Ser126 carries the post-translational modification Phosphoserine. A Phosphoserine; by PKD modification is found at Ser132. Ser135 carries the phosphoserine modification. A coiled-coil region spans residues 263–303; that stretch reads IELMVKREDSWQKRLDKETEKKRRTEEAYKNAMTELKKKSH. Ser315 carries the post-translational modification Phosphoserine. The FFAT signature appears at 321–327; that stretch reads EFFDAVE. Tyr372 is modified (phosphotyrosine). Residues Ser373, Ser377, and Ser380 each carry the phosphoserine modification. Residues 389-618 form the START domain; that stretch reads DVHRFSSQVE…FTSYVQEKTA (230 aa). Residues Glu472, Gln493, Asn530, and Tyr579 each coordinate an N-acylsphing-4-enine.

In terms of assembly, interacts with VAPA and VAPB. Interaction with VAPB is less efficient than with VAPA. Interacts (via FFAT motif) with MOSPD2 (via MSP domain). In terms of processing, phosphorylation on Ser-132 decreases the affinity toward phosphatidylinositol 4-phosphate at Golgi membranes and reduces ceramide transfer activity. Inactivated by hyperphosphorylation of serine residues by CSNK1G2/CK1 that triggers dissociation from the Golgi complex, thus down-regulating ER-to-Golgi transport of ceramide and sphingomyelin synthesis. In terms of tissue distribution, widely expressed.

The protein resides in the cytoplasm. It localises to the golgi apparatus. Its subcellular location is the endoplasmic reticulum. It carries out the reaction N-hexadecanoylsphing-4-enine(in) = N-hexadecanoylsphing-4-enine(out). In terms of biological role, shelters ceramides and diacylglycerol lipids inside its START domain and mediates the intracellular trafficking of ceramides and diacylglycerol lipids in a non-vesicular manner. The protein is Ceramide transfer protein of Homo sapiens (Human).